Reading from the N-terminus, the 445-residue chain is ATP-dependent protease ATPase subunit HslU (445 aa).

Residues Ile-17, 59-64 (GVGKTE), Asp-254, Glu-319, and Arg-391 contribute to the ATP site.

This sequence belongs to the ClpX chaperone family. HslU subfamily. In terms of assembly, a double ring-shaped homohexamer of HslV is capped on each side by a ring-shaped HslU homohexamer. The assembly of the HslU/HslV complex is dependent on binding of ATP.

Its subcellular location is the cytoplasm. ATPase subunit of a proteasome-like degradation complex; this subunit has chaperone activity. The binding of ATP and its subsequent hydrolysis by HslU are essential for unfolding of protein substrates subsequently hydrolyzed by HslV. HslU recognizes the N-terminal part of its protein substrates and unfolds these before they are guided to HslV for hydrolysis. In Pseudomonas fluorescens (strain Pf0-1), this protein is ATP-dependent protease ATPase subunit HslU.